The primary structure comprises 390 residues: Dual-specificity RNA methyltransferase RlmN (390 aa).

E110 serves as the catalytic Proton acceptor. The region spanning 116–355 (EADRATLCVS…VIIRKTRGDD (240 aa)) is the Radical SAM core domain. An intrachain disulfide couples C123 to C360. Positions 130, 134, and 137 each coordinate [4Fe-4S] cluster. S-adenosyl-L-methionine contacts are provided by residues 184 to 185 (GE), S216, 238 to 240 (SLH), and N317. C360 acts as the S-methylcysteine intermediate in catalysis.

The protein belongs to the radical SAM superfamily. RlmN family. It depends on [4Fe-4S] cluster as a cofactor.

Its subcellular location is the cytoplasm. The catalysed reaction is adenosine(2503) in 23S rRNA + 2 reduced [2Fe-2S]-[ferredoxin] + 2 S-adenosyl-L-methionine = 2-methyladenosine(2503) in 23S rRNA + 5'-deoxyadenosine + L-methionine + 2 oxidized [2Fe-2S]-[ferredoxin] + S-adenosyl-L-homocysteine. The enzyme catalyses adenosine(37) in tRNA + 2 reduced [2Fe-2S]-[ferredoxin] + 2 S-adenosyl-L-methionine = 2-methyladenosine(37) in tRNA + 5'-deoxyadenosine + L-methionine + 2 oxidized [2Fe-2S]-[ferredoxin] + S-adenosyl-L-homocysteine. Its function is as follows. Specifically methylates position 2 of adenine 2503 in 23S rRNA and position 2 of adenine 37 in tRNAs. m2A2503 modification seems to play a crucial role in the proofreading step occurring at the peptidyl transferase center and thus would serve to optimize ribosomal fidelity. In Haemophilus influenzae (strain 86-028NP), this protein is Dual-specificity RNA methyltransferase RlmN.